The following is a 740-amino-acid chain: Eukaryotic translation initiation factor 3 subunit B (740 aa).

Residues 1–10 are compositionally biased toward polar residues; sequence MAPSFDTLSE. A disordered region spans residues 1 to 20; the sequence is MAPSFDTLSEQDLHEEEEEE. One can recognise an RRM domain in the interval 40-126; that stretch reads TFVVIDGLPV…HTLLVNKLMD (87 aa). WD repeat units lie at residues 193-230, 232-289, 302-343, 455-496, 513-556, and 571-609; these read AHWT…KQKQ, PHPF…RSFV, EPKK…LLGK, SLKD…SFFA, IEKK…EKPE, and IEHY…HTFA. The segment at 695–721 is disordered; sequence DAYGLPEEADDPKLAKDAAATTQEQGE.

It belongs to the eIF-3 subunit B family. As to quaternary structure, component of the eukaryotic translation initiation factor 3 (eIF-3) complex.

It localises to the cytoplasm. Functionally, RNA-binding component of the eukaryotic translation initiation factor 3 (eIF-3) complex, which is involved in protein synthesis of a specialized repertoire of mRNAs and, together with other initiation factors, stimulates binding of mRNA and methionyl-tRNAi to the 40S ribosome. The eIF-3 complex specifically targets and initiates translation of a subset of mRNAs involved in cell proliferation. This is Eukaryotic translation initiation factor 3 subunit B (prt1) from Neosartorya fischeri (strain ATCC 1020 / DSM 3700 / CBS 544.65 / FGSC A1164 / JCM 1740 / NRRL 181 / WB 181) (Aspergillus fischerianus).